The primary structure comprises 969 residues: Poly(ADP-ribose) glycohydrolase (969 aa).

Disordered stretches follow at residues 1-149 (MSAG…QQQT), 161-341 (HAEQ…CQAR), and 368-400 (NNAGTSDLNAKPSGNSSSLNVECRSSKQHGKRD). The segment at 1–449 (MSAGPGWEPC…LPPEKKWLGT (449 aa)) is A-domain. The Nuclear localization signal motif lies at 10–16 (CTKRPRW). The segment covering 69-84 (NATSFVFKQKTITTWM) has biased composition (polar residues). The PIP-box (PCNA interacting peptide) motif lies at 77–84 (QKTITTWM). Residues 87–100 (KGPKTAESESKENN) show a composition bias toward basic and acidic residues. Residues 101–113 (NTRIDSMMSSVQK) show a composition bias toward polar residues. The segment covering 116–125 (FYPHKVEKLE) has biased composition (basic and acidic residues). Polar residues-rich tracts occupy residues 128 to 149 (PQLNLDKSPTEKSSQYLNQQQT) and 179 to 189 (QLSNANIGQSP). Ser-135 bears the Phosphoserine mark. The residue at position 137 (Thr-137) is a Phosphothreonine. The span at 190–205 (HTDDHSDTDHEEDRDN) shows a compositional bias: basic and acidic residues. Ser-195 carries the post-translational modification Phosphoserine. At Thr-197 the chain carries Phosphothreonine. Residues 226–237 (ARSNCKCSGSRQ) show a composition bias toward polar residues. Phosphoserine occurs at positions 256, 259, 281, 286, 293, 297, and 311. Residues 275 to 284 (KLTGQESSLG) show a composition bias toward polar residues. A compositionally biased stretch (acidic residues) spans 311–325 (SEADEETSPVFDEQD). Composition is skewed to polar residues over residues 329-339 (SQTANKLSSCQ) and 369-387 (NAGTSDLNAKPSGNSSSLN). Residue Lys-334 is modified to N6-acetyllysine. Residues 603–788 (QPIPLLKQKM…TEQYSEYTGY (186 aa)) form a catalytic region. 719-720 (IE) lines the substrate pocket. Residue Asp-730 is part of the active site. Substrate is bound by residues Asn-733 and Gln-747. Active-site residues include Glu-748 and Glu-749. Residues Tyr-788 and 862 to 867 (NWGCGA) contribute to the substrate site.

It belongs to the poly(ADP-ribose) glycohydrolase family. As to quaternary structure, interacts with PCNA. Interacts with NUDT5.

Its subcellular location is the nucleus. It catalyses the reaction [(1''-&gt;2')-ADP-alpha-D-ribose](n) + H2O = [(1''-&gt;2')-ADP-alpha-D-ribose](n-1) + ADP-D-ribose. Poly(ADP-ribose) glycohydrolase that degrades poly(ADP-ribose) by hydrolyzing the ribose-ribose bonds present in poly(ADP-ribose). PARG acts both as an endo- and exoglycosidase, releasing poly(ADP-ribose) of different length as well as ADP-ribose monomers. It is however unable to cleave the ester bond between the terminal ADP-ribose and ADP-ribosylated residues, leaving proteins that are mono-ADP-ribosylated. Poly(ADP-ribose) is synthesized after DNA damage is only present transiently and is rapidly degraded by PARG. Required to prevent detrimental accumulation of poly(ADP-ribose) upon prolonged replicative stress, while it is not required for recovery from transient replicative stress. Responsible for the prevalence of mono-ADP-ribosylated proteins in cells, thanks to its ability to degrade poly(ADP-ribose) without cleaving the terminal protein-ribose bond. Required for retinoid acid-dependent gene transactivation, probably by removing poly(ADP-ribose) from histone demethylase KDM4D, allowing chromatin derepression at RAR-dependent gene promoters. Involved in the synthesis of ATP in the nucleus, together with PARP1, NMNAT1 and NUDT5. Nuclear ATP generation is required for extensive chromatin remodeling events that are energy-consuming. The polypeptide is Poly(ADP-ribose) glycohydrolase (Mus musculus (Mouse)).